The following is a 176-amino-acid chain: 3-hydroxydecanoyl-[acyl-carrier-protein] dehydratase (176 aa).

The active site involves histidine 71.

Belongs to the thioester dehydratase family. FabA subfamily. Homodimer.

It is found in the cytoplasm. The catalysed reaction is a (3R)-hydroxyacyl-[ACP] = a (2E)-enoyl-[ACP] + H2O. It catalyses the reaction (3R)-hydroxydecanoyl-[ACP] = (2E)-decenoyl-[ACP] + H2O. It carries out the reaction (2E)-decenoyl-[ACP] = (3Z)-decenoyl-[ACP]. The protein operates within lipid metabolism; fatty acid biosynthesis. Its function is as follows. Necessary for the introduction of cis unsaturation into fatty acids. Catalyzes the dehydration of (3R)-3-hydroxydecanoyl-ACP to E-(2)-decenoyl-ACP and then its isomerization to Z-(3)-decenoyl-ACP. Can catalyze the dehydratase reaction for beta-hydroxyacyl-ACPs with saturated chain lengths up to 16:0, being most active on intermediate chain length. The polypeptide is 3-hydroxydecanoyl-[acyl-carrier-protein] dehydratase (Rhodopseudomonas palustris (strain BisB18)).